The chain runs to 294 residues: Lipoyl synthase 1 (294 aa).

[4Fe-4S] cluster contacts are provided by Cys38, Cys43, Cys49, Cys64, Cys68, Cys71, and Ser279. A Radical SAM core domain is found at 50-268; it reads FAGGTATFLI…EEGQTRFGFL (219 aa).

This sequence belongs to the radical SAM superfamily. Lipoyl synthase family. The cofactor is [4Fe-4S] cluster.

The protein localises to the cytoplasm. It catalyses the reaction [[Fe-S] cluster scaffold protein carrying a second [4Fe-4S](2+) cluster] + N(6)-octanoyl-L-lysyl-[protein] + 2 oxidized [2Fe-2S]-[ferredoxin] + 2 S-adenosyl-L-methionine + 4 H(+) = [[Fe-S] cluster scaffold protein] + N(6)-[(R)-dihydrolipoyl]-L-lysyl-[protein] + 4 Fe(3+) + 2 hydrogen sulfide + 2 5'-deoxyadenosine + 2 L-methionine + 2 reduced [2Fe-2S]-[ferredoxin]. The protein operates within protein modification; protein lipoylation via endogenous pathway; protein N(6)-(lipoyl)lysine from octanoyl-[acyl-carrier-protein]: step 2/2. In terms of biological role, catalyzes the radical-mediated insertion of two sulfur atoms into the C-6 and C-8 positions of the octanoyl moiety bound to the lipoyl domains of lipoate-dependent enzymes, thereby converting the octanoylated domains into lipoylated derivatives. In Prochlorococcus marinus (strain SARG / CCMP1375 / SS120), this protein is Lipoyl synthase 1.